A 500-amino-acid polypeptide reads, in one-letter code: Maturase K (500 aa).

The protein belongs to the intron maturase 2 family. MatK subfamily.

It is found in the plastid. The protein resides in the chloroplast. In terms of biological role, usually encoded in the trnK tRNA gene intron. Probably assists in splicing its own and other chloroplast group II introns. This is Maturase K from Adiantum capillus-veneris (Maidenhair fern).